The primary structure comprises 410 residues: Lissencephaly-1 homolog A (410 aa).

The LisH domain maps to 7 to 39; sequence QRDELNRAIADYLRSNGYEEAYSVFKKEAELDM. Residues 56–83 are a coiled coil; it reads TSVIRLQKKVMELESKLNEAKEEINIGG. WD repeat units lie at residues 106–145, 148–187, 190–229, 232–271, 274–333, 336–375, and 378–410; these read GHRSPVTRVIFHPVFSVIVSASEDATIKVWDHETGDFERT, GHTDSVQDISFDHTGKLLASCSADMTIKLWDFQGFECIRT, GHDHNVSSVAIMPNGDHIVSASRDKTIKMWEVATGYCVKT, GHREWVRMVRPNQDGTLIASSSNDQTVRVWVVATKECKAE, EHEH…CLMT, GHDNWVRGVLVHPGGKYIVSCADDKTLRIWDYKNKRCTKT, and AHEHFVTSLDFHKTAPYVVTGSVDQTVKVWECR.

The protein belongs to the WD repeat LIS1/nudF family. In terms of assembly, can self-associate. Component of the cytosolic PAF-AH (I) heterotetrameric enzyme, which is composed of PAFAH1B1 (beta), PAFAH1B2 (alpha2) and PAFAH1B3 (alpha1) subunits. The catalytic activity of the enzyme resides in the alpha1 (PAFAH1B3) and alpha2 (PAFAH1B2) subunits, whereas the beta subunit (PAFAH1B1) has regulatory activity. Trimer formation is not essential for the catalytic activity. Interacts with dynein, dynactin, nde1 and ndel1.

Its subcellular location is the cytoplasm. It is found in the cytoskeleton. It localises to the microtubule organizing center. The protein resides in the centrosome. Functionally, regulatory subunit (beta subunit) of the cytosolic type I platelet-activating factor (PAF) acetylhydrolase (PAF-AH (I)), an enzyme that catalyzes the hydrolyze of the acetyl group at the sn-2 position of PAF and its analogs and participates in PAF inactivation. Regulates the PAF-AH (I) activity in a catalytic dimer composition-dependent manner. Positively regulates the activity of the minus-end directed microtubule motor protein dynein. May enhance dynein-mediated microtubule sliding by targeting dynein to the microtubule plus end. Required for several dynein- and microtubule-dependent processes such as the maintenance of Golgi integrity, the peripheral transport of microtubule fragments and the coupling of the nucleus and centrosome. May be required for proliferation of neuronal precursors and neuronal migration. The protein is Lissencephaly-1 homolog A (pafah1b1a) of Danio rerio (Zebrafish).